Consider the following 397-residue polypeptide: MDRNQRPRSILDSLGEELIAILTPVSICMFTVVLLVCILNSDPSSSSASFSSIATAAYSESDSDSSWDKFVGALLNSVVFVAAITVATFVLVLLFYLRCVKFLKFYMGFSAFIVLGNLGGEILVLLIDRFRFPIDSITFLILLFNFSVVGVFAVFMSKFSILITQGYLVWIGVLVAYFFTLLPEWTTWVLLVALALYDIAAVLLPVGPLRLLVEMAISRDEDIPALVYEARPVIRNDSRSVQRRVWREQRSSQNNANRNEVRVVESAEVEEEHVGSSERAEISVPLIDRRPEQAENSETFLEGIGLGSSGAIKLGLGDFIFYSVLVGRAAMYDLMTVYACYLAIIAGLGITLMLLSVYQKALPALPVSIMLGVVFYFLARLLLEVFVVQCSSNLVMF.

Over 1–17 (MDRNQRPRSILDSLGEE) the chain is Cytoplasmic. The chain crosses the membrane as a helical span at residues 18–38 (LIAILTPVSICMFTVVLLVCI). At 39–76 (LNSDPSSSSASFSSIATAAYSESDSDSSWDKFVGALLN) the chain is on the lumenal side. A helical membrane pass occupies residues 77-97 (SVVFVAAITVATFVLVLLFYL). The Cytoplasmic segment spans residues 98-106 (RCVKFLKFY). Residues 107-127 (MGFSAFIVLGNLGGEILVLLI) traverse the membrane as a helical segment. The Lumenal segment spans residues 128–135 (DRFRFPID). A helical membrane pass occupies residues 136-156 (SITFLILLFNFSVVGVFAVFM). Over 157–158 (SK) the chain is Cytoplasmic. The helical transmembrane segment at 159 to 179 (FSILITQGYLVWIGVLVAYFF) threads the bilayer. The Lumenal segment spans residues 180–188 (TLLPEWTTW). A helical membrane pass occupies residues 189–209 (VLLVALALYDIAAVLLPVGPL). The active site involves Asp198. The Cytoplasmic portion of the chain corresponds to 210 to 305 (RLLVEMAISR…NSETFLEGIG (96 aa)). A helical transmembrane segment spans residues 306–326 (LGSSGAIKLGLGDFIFYSVLV). Asp318 is a catalytic residue. The Lumenal segment spans residues 327 to 336 (GRAAMYDLMT). The chain crosses the membrane as a helical span at residues 337-357 (VYACYLAIIAGLGITLMLLSV). Residues 358-366 (YQKALPALP) lie on the Cytoplasmic side of the membrane. A PAL motif is present at residues 363-365 (PAL). The segment at residues 367–387 (VSIMLGVVFYFLARLLLEVFV) is an intramembrane region (helical). The Cytoplasmic segment spans residues 388-397 (VQCSSNLVMF).

Belongs to the peptidase A22A family. As to quaternary structure, homodimer. Probable component of the gamma-secretase complex, a complex composed of a presenilin homodimer, nicastrin, APH1 and PEN2.

It is found in the endoplasmic reticulum membrane. The protein localises to the golgi apparatus membrane. Its function is as follows. Probable subunit of the gamma-secretase complex, an endoprotease complex that catalyzes the intramembrane cleavage of integral membrane proteins such as Notch receptors. This chain is Presenilin-like protein At2g29900, found in Arabidopsis thaliana (Mouse-ear cress).